We begin with the raw amino-acid sequence, 633 residues long: Guanylate-binding protein 6 (633 aa).

The interval 1–310 (MESGPKMLAP…EAVNSGAVPC (310 aa)) is GTPase domain (Globular). Residues 35–277 (SQPVVVVAIV…FSSYIFTHAR (243 aa)) form the GB1/RHD3-type G domain. GTP-binding positions include 45–52 (GLYRTGKS), 67–69 (LGS), and 97–101 (DTEGL).

The protein belongs to the TRAFAC class dynamin-like GTPase superfamily. GB1/RHD3 GTPase family. GB1 subfamily.

The protein localises to the cytoplasmic vesicle. The catalysed reaction is GTP + H2O = GDP + phosphate + H(+). Its function is as follows. Interferon (IFN)-inducible GTPase that plays important roles in innate immunity against a diverse range of bacterial, viral and protozoan pathogens, such as bacterial pathogens Listeria monocytogenes and Mycobacterium bovis BCG as well as the protozoan pathogen Toxoplasma gondii. Confers protection to several pathogens, including the bacterial pathogens Listeria monocytogenes and Mycobacterium bovis BCG as well as the protozoan pathogen Toxoplasma gondii. This is Guanylate-binding protein 6 (GBP6) from Pongo abelii (Sumatran orangutan).